A 239-amino-acid chain; its full sequence is NAD(P)H-hydrate epimerase (239 aa).

Positions 14 to 220 (AAALDQELMS…EMAEQYNLDI (207 aa)) constitute a YjeF N-terminal domain. 64-68 (NNGGD) provides a ligand contact to (6S)-NADPHX. Positions 65 and 126 each coordinate K(+). Residues 130–136 (GFSFSGE) and aspartate 159 each bind (6S)-NADPHX. Serine 162 is a K(+) binding site.

Belongs to the NnrE/AIBP family. The cofactor is K(+).

It is found in the cytoplasm. Its subcellular location is the mitochondrion. It catalyses the reaction (6R)-NADHX = (6S)-NADHX. It carries out the reaction (6R)-NADPHX = (6S)-NADPHX. Functionally, catalyzes the epimerization of the S- and R-forms of NAD(P)HX, a damaged form of NAD(P)H that is a result of enzymatic or heat-dependent hydration. This is a prerequisite for the S-specific NAD(P)H-hydrate dehydratase to allow the repair of both epimers of NAD(P)HX. This chain is NAD(P)H-hydrate epimerase, found in Phaeosphaeria nodorum (strain SN15 / ATCC MYA-4574 / FGSC 10173) (Glume blotch fungus).